We begin with the raw amino-acid sequence, 237 residues long: Ubiquinone biosynthesis O-methyltransferase (237 aa).

S-adenosyl-L-methionine contacts are provided by Arg-38, Gly-58, Asp-79, and Met-124.

It belongs to the methyltransferase superfamily. UbiG/COQ3 family.

The catalysed reaction is a 3-demethylubiquinol + S-adenosyl-L-methionine = a ubiquinol + S-adenosyl-L-homocysteine + H(+). It catalyses the reaction a 3-(all-trans-polyprenyl)benzene-1,2-diol + S-adenosyl-L-methionine = a 2-methoxy-6-(all-trans-polyprenyl)phenol + S-adenosyl-L-homocysteine + H(+). The protein operates within cofactor biosynthesis; ubiquinone biosynthesis. In terms of biological role, O-methyltransferase that catalyzes the 2 O-methylation steps in the ubiquinone biosynthetic pathway. The chain is Ubiquinone biosynthesis O-methyltransferase from Acinetobacter baumannii (strain SDF).